A 999-amino-acid chain; its full sequence is Caspase recruitment domain-containing protein 14 (999 aa).

One can recognise a CARD domain in the interval 15 to 107 (DEEMLWDMLE…DVYTLVTGLQ (93 aa)). Positions 125 to 411 (TECLAGAISS…QLRRLQAEAP (287 aa)) form a coiled coil. Residues 409–565 (EAPGGPKQEA…RRPARKILSQ (157 aa)) are maintains the protein in an inactive state. Serine 541 bears the Phosphoserine mark. A PDZ domain is found at 572-655 (QGDALLEQIG…SCYLSVKINT (84 aa)). A Guanylate kinase-like domain is found at 803-986 (SESCFTLAPY…LLSCVRLAIA (184 aa)).

Interacts (via CARD domain) with BCL10 (via CARD domain). Forms a complex with MALT1 and BCL10; resulting in the formation of a CBM (CARD14-BLC10-MALT1) complex. Interacts with TRAF2, TRAF3 and TRAF6.

The protein localises to the cytoplasm. Its function is as follows. Acts as a scaffolding protein that can activate the inflammatory transcription factor NF-kappa-B and p38/JNK MAP kinase signaling pathways. Forms a signaling complex with BCL10 and MALT1, and activates MALT1 proteolytic activity and inflammatory gene expression. MALT1 is indispensable for CARD14-induced activation of NF-kappa-B and p38/JNK MAP kinases. May play a role in signaling mediated by TRAF2, TRAF3 and TRAF6 and protects cells against apoptosis. In Mus musculus (Mouse), this protein is Caspase recruitment domain-containing protein 14 (Card14).